Consider the following 1325-residue polypeptide: Nonribosomal peptide synthetase (1325 aa).

Residues 248-644 (YQQLDRLSTR…LGEIEYQIQQ (397 aa)) form an adenylation region. A Carrier domain is found at 779-856 (EIVNPGEITL…DQARLLRPLS (78 aa)). Serine 816 is subject to O-(pantetheine 4'-phosphoryl)serine. Residues 893 to 1310 (EDVYPCTPLQ…DDYSTTLHTL (418 aa)) are condensation.

Belongs to the NRP synthetase family. The cofactor is pantetheine 4'-phosphate.

The protein operates within antifungal biosynthesis. Nonribosomal peptide synthetase; part of the gene cluster that mediates the biosynthesis of the tetrahydropyranyl antifungal agent lanomycin that acts as an inhibitor of CYP51 and blocks the ergosterol biosynthesis. The biosynthesis probably begins with the formation of an hexaketide, followed by methionine mediated alkylation of C-2 and C-6, and methylation of the reduced C-3 oxygen, pyran forming reductive ring closure, oxygenation of C-4, beta-keto reduction, enoyl reduction and dehydration of the remaining oxygens, and finally, acylation with glycine to complete the biosynthesis. The chain is Nonribosomal peptide synthetase from Pyrenophora dematioidea (Helminthosporium dematioideum).